The primary structure comprises 232 residues: Ubiquinone biosynthesis O-methyltransferase (232 aa).

Arginine 36, glycine 55, aspartate 76, and methionine 120 together coordinate S-adenosyl-L-methionine.

This sequence belongs to the methyltransferase superfamily. UbiG/COQ3 family.

The catalysed reaction is a 3-demethylubiquinol + S-adenosyl-L-methionine = a ubiquinol + S-adenosyl-L-homocysteine + H(+). It catalyses the reaction a 3-(all-trans-polyprenyl)benzene-1,2-diol + S-adenosyl-L-methionine = a 2-methoxy-6-(all-trans-polyprenyl)phenol + S-adenosyl-L-homocysteine + H(+). It functions in the pathway cofactor biosynthesis; ubiquinone biosynthesis. Functionally, O-methyltransferase that catalyzes the 2 O-methylation steps in the ubiquinone biosynthetic pathway. The polypeptide is Ubiquinone biosynthesis O-methyltransferase (Burkholderia mallei (strain ATCC 23344)).